The primary structure comprises 48 residues: ATP synthase protein 8 (48 aa).

M1 is modified (N-formylmethionine). Over 1–12 (MPQLVPFYFTNQ) the chain is Mitochondrial intermembrane. The chain crosses the membrane as a helical span at residues 13–32 (IFYGFASLSVIVYLFSIYIL). Over 33-48 (PHYLEIYVTRIFITKT) the chain is Mitochondrial matrix.

F-type ATP synthases have 2 components, the catalytic core F(1) and the membrane-embedded component F(0), linked together by a central stalk and a peripheral stalk. The central stalk, also called rotor shaft, is often seen as part of F(1). The peripheral stalk is seen as part of F(0). F(0) contains the membrane channel next to the rotor. F-type ATP synthases form dimers but each monomer functions independently in ATP generation. The dimer consists of 17 different polypeptides: ATP1 (subunit alpha, 3 molecules per monomer, part of F(1)), ATP2 (subunit beta, 3 copies per monomer, part of F(1)), ATP3 (subunit gamma, part of the central stalk), ATP4 (subunit b, part of the peripheral stalk), ATP5/OSCP (subunit 5/OSCP, part of the peripheral stalk), ATP6 (subunit a, part of the peripheral stalk), ATP7 (subunit d, part of the peripheral stalk), ATP8 (subunit 8, part of the peripheral stalk), OLI1 (subunit c, part of the rotor, 10 molecules per monomer), ATP14 (subunit h, part of the peripheral stalk), ATP15 (subunit epsilon, part of the central stalk), ATP16 (subunit delta, part of the central stalk), ATP17 (subunit f, part of the peripheral stalk), ATP18 (subunit i/j, part of the peripheral stalk), ATP19 (subunit k, dimer-specific, at interface between monomers), ATP20 (subunit g, at interface between monomers), TIM11 (subunit e, at interface between monomers).

It localises to the mitochondrion inner membrane. Its function is as follows. Mitochondrial membrane ATP synthase (F(1)F(0) ATP synthase or Complex V) produces ATP from ADP in the presence of a proton gradient across the membrane which is generated by electron transport complexes of the respiratory chain. F-type ATP synthases consist of two structural domains, F(1) - containing the extramembraneous catalytic core, and F(0) - containing the membrane proton channel, linked together by a central stalk and a peripheral stalk. During catalysis, ATP synthesis in the catalytic domain of F(1) is coupled via a rotary mechanism of the central stalk subunits to proton translocation. Part of the complex F(0) domain. Minor subunit located with subunit a/ATP6 in the membrane. The protein is ATP synthase protein 8 of Yarrowia lipolytica (strain CLIB 122 / E 150) (Yeast).